Consider the following 183-residue polypeptide: Threonylcarbamoyl-AMP synthase (183 aa).

The region spanning Met-1 to Gly-183 is the YrdC-like domain.

It belongs to the SUA5 family. TsaC subfamily.

It localises to the cytoplasm. The catalysed reaction is L-threonine + hydrogencarbonate + ATP = L-threonylcarbamoyladenylate + diphosphate + H2O. Functionally, required for the formation of a threonylcarbamoyl group on adenosine at position 37 (t(6)A37) in tRNAs that read codons beginning with adenine. Catalyzes the conversion of L-threonine, HCO(3)(-)/CO(2) and ATP to give threonylcarbamoyl-AMP (TC-AMP) as the acyladenylate intermediate, with the release of diphosphate. In Haemophilus influenzae (strain 86-028NP), this protein is Threonylcarbamoyl-AMP synthase.